A 723-amino-acid polypeptide reads, in one-letter code: Polyribonucleotide nucleotidyltransferase (723 aa).

Mg(2+) is bound by residues Asp488 and Asp494. The region spanning 555 to 614 (PKIITLNIKPEKIKDVIGPGGKQINAIIEETGVKIDIEQDGTVYIASQDQAMNRKAIAII) is the KH domain. The region spanning 624–692 (GEVYTGKVRR…HQGRVNLSRK (69 aa)) is the S1 motif domain. Positions 692 to 723 (KALLEKKEQPEGDKKPQAEKKFYPKTKKPESK) are disordered. The segment covering 693–723 (ALLEKKEQPEGDKKPQAEKKFYPKTKKPESK) has biased composition (basic and acidic residues).

This sequence belongs to the polyribonucleotide nucleotidyltransferase family. Mg(2+) is required as a cofactor.

It is found in the cytoplasm. The enzyme catalyses RNA(n+1) + phosphate = RNA(n) + a ribonucleoside 5'-diphosphate. Functionally, involved in mRNA degradation. Catalyzes the phosphorolysis of single-stranded polyribonucleotides processively in the 3'- to 5'-direction. This chain is Polyribonucleotide nucleotidyltransferase, found in Listeria innocua serovar 6a (strain ATCC BAA-680 / CLIP 11262).